A 501-amino-acid chain; its full sequence is Lysine--tRNA ligase (501 aa).

Residues Glu411 and Glu418 each contribute to the Mg(2+) site.

This sequence belongs to the class-II aminoacyl-tRNA synthetase family. Homodimer. Mg(2+) is required as a cofactor.

It localises to the cytoplasm. The catalysed reaction is tRNA(Lys) + L-lysine + ATP = L-lysyl-tRNA(Lys) + AMP + diphosphate. The sequence is that of Lysine--tRNA ligase from Shewanella woodyi (strain ATCC 51908 / MS32).